The sequence spans 501 residues: Carotenoid cleavage oxygenase (501 aa).

Fe cation-binding residues include histidine 162, histidine 211, histidine 314, and histidine 494.

Belongs to the carotenoid oxygenase family. Fe(2+) serves as cofactor.

In terms of biological role, catalyzes the oxidative cleavage of several carotenoids and apocarotenoids in vitro. In Mycobacterium tuberculosis (strain CDC 1551 / Oshkosh), this protein is Carotenoid cleavage oxygenase.